We begin with the raw amino-acid sequence, 216 residues long: METPNDLVKEEKRQGASENQDWSKLCPDLLRPILESLSSIDFHRAKTVCSDWYSVWKTCKGYDSKWNQNSGSIFDMAYKNSKLYLYTLDHHIKIYDFSGDSPKEEGLTNPYSNHPFRFDEKPQEYIWKRKIVIAESGEMMNEMLIFGHGVTMRAQVHDVGDGIKRDSICFVEDDLWPDFDRPSNCGIFNLATSRITWPKRYGVYIDQKQWFLPGFA.

In terms of domain architecture, F-box spans Asn-19 to Asn-69.

The chain is Putative F-box protein At2g03610 from Arabidopsis thaliana (Mouse-ear cress).